A 353-amino-acid polypeptide reads, in one-letter code: MALSPEKEKALAAAMSQIDRKYGKGSIMRMGEVSSKLAIEVIPTGSIALDIALGVGGVPRGRVVEIYGPESSGKTTLAQHIIAEAQKMGGIAAFIDAEHAFDPVYAARCGVDVNNLLVSQPDYGEQALEICEALVRSNAVDVVVVDSVAALVPRAEIEGDMGDSLPGLQARLMSQALRKLSGAISKSRAVVIFLNQLRLKIGVMFGSPETTTGGQALKFYASVRMDIRRIETLKNGQETIGSRTRVKVVKNKVAPPFRQAEFDIMHNEGISRAGNILDVGVELDIIRKSGAWFYLGDDRLGQGRENAKQFLNENPALADEIERLIRAHAMAAPISIVSPKEDDAVEDAGLFEE.

68–75 lines the ATP pocket; the sequence is GPESSGKT.

It belongs to the RecA family.

It localises to the cytoplasm. Its function is as follows. Can catalyze the hydrolysis of ATP in the presence of single-stranded DNA, the ATP-dependent uptake of single-stranded DNA by duplex DNA, and the ATP-dependent hybridization of homologous single-stranded DNAs. It interacts with LexA causing its activation and leading to its autocatalytic cleavage. This chain is Protein RecA, found in Roseiflexus sp. (strain RS-1).